The chain runs to 365 residues: UDP-N-acetylglucosamine--N-acetylmuramyl-(pentapeptide) pyrophosphoryl-undecaprenol N-acetylglucosamine transferase (365 aa).

Residues 10–12 (TGG), asparagine 124, arginine 165, serine 193, isoleucine 248, and glutamine 293 contribute to the UDP-N-acetyl-alpha-D-glucosamine site.

It belongs to the glycosyltransferase 28 family. MurG subfamily.

It is found in the cell inner membrane. It catalyses the reaction di-trans,octa-cis-undecaprenyl diphospho-N-acetyl-alpha-D-muramoyl-L-alanyl-D-glutamyl-meso-2,6-diaminopimeloyl-D-alanyl-D-alanine + UDP-N-acetyl-alpha-D-glucosamine = di-trans,octa-cis-undecaprenyl diphospho-[N-acetyl-alpha-D-glucosaminyl-(1-&gt;4)]-N-acetyl-alpha-D-muramoyl-L-alanyl-D-glutamyl-meso-2,6-diaminopimeloyl-D-alanyl-D-alanine + UDP + H(+). The protein operates within cell wall biogenesis; peptidoglycan biosynthesis. Its function is as follows. Cell wall formation. Catalyzes the transfer of a GlcNAc subunit on undecaprenyl-pyrophosphoryl-MurNAc-pentapeptide (lipid intermediate I) to form undecaprenyl-pyrophosphoryl-MurNAc-(pentapeptide)GlcNAc (lipid intermediate II). This chain is UDP-N-acetylglucosamine--N-acetylmuramyl-(pentapeptide) pyrophosphoryl-undecaprenol N-acetylglucosamine transferase, found in Geotalea uraniireducens (strain Rf4) (Geobacter uraniireducens).